Reading from the N-terminus, the 245-residue chain is UPF0246 protein Cgl1995/cg2186 (245 aa).

The protein belongs to the UPF0246 family.

The chain is UPF0246 protein Cgl1995/cg2186 from Corynebacterium glutamicum (strain ATCC 13032 / DSM 20300 / JCM 1318 / BCRC 11384 / CCUG 27702 / LMG 3730 / NBRC 12168 / NCIMB 10025 / NRRL B-2784 / 534).